A 4069-amino-acid chain; its full sequence is Cardiomyopathy-associated protein 5 (4069 aa).

23 disordered regions span residues 1-177 (MASR…SQVL), 341-387 (TVPS…DTPA), 442-525 (GLAA…EDSN), 538-558 (ESPL…VEHK), 597-705 (EYSV…VPSL), 732-793 (PSEE…RFTP), 844-872 (SSPD…APPL), 890-948 (LERY…FSPD), 979-1009 (TSPS…VSIP), 1041-1097 (ADEE…PEIP), 1160-1179 (VKEE…SVPA), 1205-1237 (RKEE…PESE), 1540-1575 (KETE…ELEN), 1594-1742 (PAVE…EEFQ), 1757-1809 (HPAD…ITEP), 1892-1988 (ENWM…VKLA), 2064-2175 (TISS…KKGI), 2187-2259 (FGSS…SGDG), 2385-2412 (PQQP…SIIL), 2425-2463 (SEDR…LENR), 2494-2527 (TQIT…NERP), 2653-2706 (QEGN…VGTQ), and 2750-2862 (SSRD…SDVP). Residues 27–47 (ETEEESEGEEDETAAESEEEP) show a composition bias toward acidic residues. The segment covering 48–62 (DSRLSDQDEEGKIKQ) has biased composition (basic and acidic residues). Residues 84 to 119 (TWETNSSRSSTPWASEESQTSGVCSREGSTVNSPPG) show a composition bias toward polar residues. The segment covering 130–153 (KVRKRTHKSKHGSPSLRRKGNRKR) has biased composition (basic residues). Residue Ser-155 is modified to Phosphoserine. Composition is skewed to polar residues over residues 156-177 (FESQ…SQVL) and 341-350 (TVPSYSSSGR). Over residues 489 to 499 (LEPSISLSEPL) the composition is skewed to low complexity. Residues 500–510 (MLEEPEKEEIE) are compositionally biased toward acidic residues. Ser-631 carries the post-translational modification Phosphoserine. Positions 640–659 (AYSPAAAPTSESSLSPSTTE) are enriched in low complexity. Composition is skewed to polar residues over residues 664–673 (NQSPLFSTVT), 692–701 (PDSTSASEYS), and 752–775 (PSLS…TATS). Residues 1049-1063 (TAATPVSEQFSSSQK) show a composition bias toward polar residues. Positions 1085–1094 (DKSEKAEIKP) are enriched in basic and acidic residues. The segment covering 1214–1223 (QEATAHVSQD) has biased composition (polar residues). Positions 1621–1630 (EPEKKDKPHQ) are enriched in basic and acidic residues. Residues 1639–1662 (SEFSSDLGRQSGSIGTKQAKSPIT) are compositionally biased toward polar residues. 3 stretches are compositionally biased toward basic and acidic residues: residues 1668–1687 (VLEK…ENRE), 1704–1714 (LREESQNEEIK), and 1786–1795 (ILDKLSEETG). Over residues 1796–1808 (HPNSSQVLQSITE) the composition is skewed to polar residues. Positions 1935–1955 (SKDHTCEVRKQVLPHSAEESH) are enriched in basic and acidic residues. The span at 1956–1980 (LSSQEAVSALDTSSGNTETLSSKSY) shows a compositional bias: polar residues. Residues 2085 to 2124 (NEKEAHRSTPPFPEEKPLEESKMVQSKVIDDADEGKKPSP) show a composition bias toward basic and acidic residues. The span at 2145–2155 (SPESPEVTQNP) shows a compositional bias: polar residues. 2 stretches are compositionally biased toward basic and acidic residues: residues 2162–2172 (AKPDLPEEKGK) and 2232–2250 (KPAD…DEPR). Polar residues predominate over residues 2387-2399 (QPKSASSNFASKN). A Phosphoserine modification is found at Ser-2404. The segment covering 2441–2461 (ISEEETKLRSVSPTEKKDNLE) has biased composition (basic and acidic residues). 3 stretches are compositionally biased toward basic and acidic residues: residues 2661 to 2681 (KSSR…ESEL), 2750 to 2769 (SSRD…ESEL), and 2777 to 2804 (ITKE…ETKS). Ser-2813 is modified (phosphoserine). Basic and acidic residues predominate over residues 2830-2847 (AVKKKEMPRSELTPERHT). Residues 2964-2988 (SIDQEESEQMQDKLEYLEEKASFKT) are a coiled coil. The segment covering 3015–3031 (PLKENKQKETHKTKEEI) has biased composition (basic and acidic residues). Disordered stretches follow at residues 3015-3037 (PLKE…DSET), 3119-3156 (EKGH…PGMP), 3204-3231 (KKKE…SDTD), 3386-3421 (SGAT…QDEY), and 3465-3495 (EFAS…SSEV). A required for RYR2 clustering region spans residues 3052–3365 (YFEKYTLIDY…GSHGNEVGNA (314 aa)). The span at 3128–3138 (PETQSQNSADR) shows a compositional bias: polar residues. Residues 3139–3150 (NVSKDTKRDVDS) are compositionally biased toward basic and acidic residues. A compositionally biased stretch (polar residues) spans 3213–3227 (EGDSVNSEASFPSRN). The residue at position 3228 (Ser-3228) is a Phosphoserine. Residues 3477–3489 (EQKELGSERKEED) show a composition bias toward basic and acidic residues. The tract at residues 3517–3544 (KCPISATDKVFGTHKDHEVSTLDTAISA) is amphipathic helix H1. Residues 3544–3653 (AVKVQLAEFL…REAEELDEAV (110 aa)) are a coiled coil. The interval 3545 to 3672 (VKVQLAEFLE…ERLLSAMEST (128 aa)) is B-box coiled-coil; BBC. The segment at 3631–3648 (SMDTAKDTLETIVREAEE) is amphipathic helix H2. Fibronectin type-III domains follow at residues 3704-3805 (VPQP…TAPS) and 3806-3898 (TPVI…TRGT). The amphipathic helix H3 stretch occupies residues 3751–3767 (EVNELVEEYRLTVKESY). The region spanning 3880-4065 (NAFGTSEQSE…LHLGIEPPDS (186 aa)) is the B30.2/SPRY domain.

As to quaternary structure, interacts with PRKAR2A. Interacts with ACTN2 and DTNBP1/dysbindin. Interacts with DES. Interacts with DMD/dystrophin. Interacts with the calcineurin catalytic subunit PPP3CA. Interacts with TTN. Interacts with CAPN3; this interaction, which results in CMYA5 proteolysis, may protect CAPN3 from autolysis. Interacts with FSD2. Identified in a complex composed of FSD2, CMYA5 and RYR2. In terms of processing, phosphorylated by PKA. In terms of tissue distribution, expressed in skeletal muscle; at a strong level and in heart.

It localises to the nucleus. Its subcellular location is the sarcoplasmic reticulum. The protein resides in the cytoplasm. It is found in the perinuclear region. The protein localises to the myofibril. It localises to the sarcomere. Its subcellular location is the m line. In terms of biological role, may serve as an anchoring protein that mediates the subcellular compartmentation of protein kinase A (PKA) via binding to PRKAR2A. May function as a repressor of calcineurin-mediated transcriptional activity. May attenuate calcineurin ability to induce slow-fiber gene program in muscle and may negatively modulate skeletal muscle regeneration. Plays a role in the assembly of ryanodine receptor (RYR2) clusters in striated muscle. This Homo sapiens (Human) protein is Cardiomyopathy-associated protein 5 (CMYA5).